The following is a 142-amino-acid chain: Relaxin-3 (142 aa).

A signal peptide spans 1–25; sequence MARYKLLLLLAVWVLTGELWPGAEA. 3 disulfide bridges follow: Cys-35–Cys-129, Cys-47–Cys-142, and Cys-128–Cys-133. The propeptide at 55–118 is connecting peptide; sequence SDILAHEAMG…GTPGALRGSR (64 aa).

Belongs to the insulin family. As to quaternary structure, heterodimer of a B chain and an A chain linked by two disulfide bonds.

Its subcellular location is the secreted. Its function is as follows. May play a role in neuropeptide signaling processes. Ligand for LGR7, RXFP3 and RXFP4. The polypeptide is Relaxin-3 (RLN3) (Pan troglodytes (Chimpanzee)).